The chain runs to 515 residues: MTEPTRAQAATPTTEGLAVDENKIIAERREKLQALRQQGVAFPNDFQPTHQAGALHAQYGETDQATLEASPVEVSIAGRMMLKRVMGKASFATVQDGSGQIQFYITRDKVGEDVYAAFKHWDLGDIISARGELFRTNKGELSVQVRELRLLSKALRPLPDKFHGLADQETKYRQRYVDLIVSPETRSTFRARTQAISSIRRHMADAGFMEVETPMLHPIPGGAAAKPFITHHNALDMQMFMRIAPELYLKRLIVGGFERVFEINRNFRNEGVSPRHNPEFTMMEFYAAYTDYRWLMDFTENLIRQAAIDARGSATVTYQGRELDLSKPFHRLTICGAIQKYAPEYTDAQLADADFLRAELKNKFKINTSAPQFLNAGLGTLQLVLFEETAEAQLWEPTYIVDYPVEVSPLARGSDTQPGITERFELFITGREIANGFSELNDPEDQAERFRKQVEQKDAGDEEAMYFDADYIRALEYGMPPTGGCGIGIDRLVMLLTDSPNIRDVILFPHLRRED.

Residues Glu425 and Glu432 each coordinate Mg(2+).

The protein belongs to the class-II aminoacyl-tRNA synthetase family. In terms of assembly, homodimer. The cofactor is Mg(2+).

Its subcellular location is the cytoplasm. It catalyses the reaction tRNA(Lys) + L-lysine + ATP = L-lysyl-tRNA(Lys) + AMP + diphosphate. The protein is Lysine--tRNA ligase of Cupriavidus metallidurans (strain ATCC 43123 / DSM 2839 / NBRC 102507 / CH34) (Ralstonia metallidurans).